Consider the following 380-residue polypeptide: G-protein coupled receptor (380 aa).

A run of 7 helical transmembrane segments spans residues 26–46 (VISI…YLGI), 60–80 (LVCC…PLWV), 97–117 (FAGM…VIVT), 145–165 (VTIL…ETSI), 184–204 (AALG…HIIL), 220–240 (ILMW…SLSA), and 275–295 (VAML…VPLI). A disulfide bridge connects residues C95 and C170. The interval 328–380 (SQSKLLRGEENPNYDYSPKSVRIKPLKSPGGGDNSSLKDEGYDEESQNGFSIG) is disordered.

It belongs to the G-protein coupled receptor 1 family.

It is found in the host membrane. This chain is G-protein coupled receptor, found in Elephas maximus (Indian elephant).